Here is a 464-residue protein sequence, read N- to C-terminus: Siroheme synthase (464 aa).

Residues 1–203 form a precorrin-2 dehydrogenase /sirohydrochlorin ferrochelatase region; sequence MDYLPLFHNL…GQETEAERLL (203 aa). Residues 22–23 and 43–44 contribute to the NAD(+) site; these read EI and PQ. The residue at position 128 (Ser-128) is a Phosphoserine. Residues 216 to 464 form a uroporphyrinogen-III C-methyltransferase region; it reads GEVYLVGAGP…AWFEGRQSAD (249 aa). Pro-225 serves as a coordination point for S-adenosyl-L-methionine. The active-site Proton acceptor is the Asp-248. Lys-270 serves as the catalytic Proton donor. S-adenosyl-L-methionine-binding positions include 301 to 303, Ile-306, 331 to 332, Met-383, and Gly-412; these read GGD and TA.

This sequence in the N-terminal section; belongs to the precorrin-2 dehydrogenase / sirohydrochlorin ferrochelatase family. It in the C-terminal section; belongs to the precorrin methyltransferase family.

The enzyme catalyses uroporphyrinogen III + 2 S-adenosyl-L-methionine = precorrin-2 + 2 S-adenosyl-L-homocysteine + H(+). The catalysed reaction is precorrin-2 + NAD(+) = sirohydrochlorin + NADH + 2 H(+). It carries out the reaction siroheme + 2 H(+) = sirohydrochlorin + Fe(2+). It participates in cofactor biosynthesis; adenosylcobalamin biosynthesis; precorrin-2 from uroporphyrinogen III: step 1/1. It functions in the pathway cofactor biosynthesis; adenosylcobalamin biosynthesis; sirohydrochlorin from precorrin-2: step 1/1. Its pathway is porphyrin-containing compound metabolism; siroheme biosynthesis; precorrin-2 from uroporphyrinogen III: step 1/1. The protein operates within porphyrin-containing compound metabolism; siroheme biosynthesis; siroheme from sirohydrochlorin: step 1/1. It participates in porphyrin-containing compound metabolism; siroheme biosynthesis; sirohydrochlorin from precorrin-2: step 1/1. Multifunctional enzyme that catalyzes the SAM-dependent methylations of uroporphyrinogen III at position C-2 and C-7 to form precorrin-2 via precorrin-1. Then it catalyzes the NAD-dependent ring dehydrogenation of precorrin-2 to yield sirohydrochlorin. Finally, it catalyzes the ferrochelation of sirohydrochlorin to yield siroheme. This chain is Siroheme synthase, found in Azotobacter vinelandii (strain DJ / ATCC BAA-1303).